Here is a 287-residue protein sequence, read N- to C-terminus: Elongation factor Ts (287 aa).

The interval 80-83 (TDFL) is involved in Mg(2+) ion dislocation from EF-Tu.

This sequence belongs to the EF-Ts family.

It localises to the cytoplasm. Functionally, associates with the EF-Tu.GDP complex and induces the exchange of GDP to GTP. It remains bound to the aminoacyl-tRNA.EF-Tu.GTP complex up to the GTP hydrolysis stage on the ribosome. This is Elongation factor Ts from Ectopseudomonas mendocina (strain ymp) (Pseudomonas mendocina).